The chain runs to 430 residues: 3-phosphoshikimate 1-carboxyvinyltransferase (430 aa).

3-phosphoshikimate contacts are provided by lysine 23, serine 24, and arginine 28. Residue lysine 23 participates in phosphoenolpyruvate binding. Residues glycine 93 and arginine 121 each contribute to the phosphoenolpyruvate site. Positions 166, 168, 313, and 340 each coordinate 3-phosphoshikimate. Glutamine 168 contributes to the phosphoenolpyruvate binding site. The active-site Proton acceptor is the aspartate 313. The phosphoenolpyruvate site is built by arginine 344 and arginine 386.

This sequence belongs to the EPSP synthase family. In terms of assembly, monomer.

It is found in the cytoplasm. It carries out the reaction 3-phosphoshikimate + phosphoenolpyruvate = 5-O-(1-carboxyvinyl)-3-phosphoshikimate + phosphate. The protein operates within metabolic intermediate biosynthesis; chorismate biosynthesis; chorismate from D-erythrose 4-phosphate and phosphoenolpyruvate: step 6/7. In terms of biological role, catalyzes the transfer of the enolpyruvyl moiety of phosphoenolpyruvate (PEP) to the 5-hydroxyl of shikimate-3-phosphate (S3P) to produce enolpyruvyl shikimate-3-phosphate and inorganic phosphate. The sequence is that of 3-phosphoshikimate 1-carboxyvinyltransferase from Anaeromyxobacter sp. (strain Fw109-5).